Here is a 356-residue protein sequence, read N- to C-terminus: Peptide chain release factor 1 (356 aa).

An N5-methylglutamine modification is found at Gln-233.

Belongs to the prokaryotic/mitochondrial release factor family. Methylated by PrmC. Methylation increases the termination efficiency of RF1.

The protein resides in the cytoplasm. Its function is as follows. Peptide chain release factor 1 directs the termination of translation in response to the peptide chain termination codons UAG and UAA. This chain is Peptide chain release factor 1, found in Oceanobacillus iheyensis (strain DSM 14371 / CIP 107618 / JCM 11309 / KCTC 3954 / HTE831).